Here is a 59-residue protein sequence, read N- to C-terminus: MAVQQNKKSPSKRGMHRSHDFLNAAPLAVEPSTGEVHLRHHISPNGYYRGKKVVKTKND.

The segment at 1–25 (MAVQQNKKSPSKRGMHRSHDFLNAA) is disordered.

This sequence belongs to the bacterial ribosomal protein bL32 family.

The protein is Large ribosomal subunit protein bL32 of Paraburkholderia phymatum (strain DSM 17167 / CIP 108236 / LMG 21445 / STM815) (Burkholderia phymatum).